The primary structure comprises 468 residues: MVGFSRCALSQLRQPKAQLVRSFSHIPSRAYSAPSSSIPAAKKKYIPTSGTYPLGFQVSGTIVGVKPSNTTKPDLALLTSEVPCAAAAVFTKNKFQAAPVTFSRALLQKKGNKGIQGVVINSGCANAVTGKGGLEDAAKMAQAADKCLGQSDSIIVMSTGVIGQRLPIDKIINNVPKAHSALGGSHEHWLTMAKAICTTDTFPKLISRTFTLPSSPGVEYRIAGTTKGAGMIHPNMATLLGVIATDAPISSSALPSVLKHAVDRSFNSITIDGDTSTNDTVALLANGMAGGKEVVEGTPDYEAFREVLTKFSTELAQLIVRDGEGATKFVTIKVVDSASEEAARKIASTIARSPLVKTALYGKDANWGRILCATGYSLISEPSEPINDVPEIVPENTNVSFVPTDGTAELKLLVNGEPEQVDEARAAEILELEDLEILVRLGTGDKQATYWTCDYSHEYITINGDYRT.

A mitochondrion-targeting transit peptide spans 1–23 (MVGFSRCALSQLRQPKAQLVRSF). Substrate is bound by residues T198, K227, T238, E324, N463, and T468. Catalysis depends on T238, which acts as the Nucleophile.

The protein belongs to the ArgJ family. In terms of assembly, heterodimer of an alpha and a beta chain. In terms of processing, the alpha and beta chains are autoproteolytically processed from a single precursor protein within the mitochondrion.

Its subcellular location is the mitochondrion matrix. It carries out the reaction N(2)-acetyl-L-ornithine + L-glutamate = N-acetyl-L-glutamate + L-ornithine. The catalysed reaction is L-glutamate + acetyl-CoA = N-acetyl-L-glutamate + CoA + H(+). It participates in amino-acid biosynthesis; L-arginine biosynthesis; L-ornithine and N-acetyl-L-glutamate from L-glutamate and N(2)-acetyl-L-ornithine (cyclic): step 1/1. It functions in the pathway amino-acid biosynthesis; L-arginine biosynthesis; N(2)-acetyl-L-ornithine from L-glutamate: step 1/4. Its function is as follows. Catalyzes two activities which are involved in the cyclic version of arginine biosynthesis: the synthesis of acetylglutamate from glutamate and acetyl-CoA, and of ornithine by transacetylation between acetylornithine and glutamate. This Podospora anserina (strain S / ATCC MYA-4624 / DSM 980 / FGSC 10383) (Pleurage anserina) protein is Arginine biosynthesis bifunctional protein ArgJ, mitochondrial.